Reading from the N-terminus, the 124-residue chain is uncharacterized protein (124 aa).

Residues 82 to 124 form a disordered region; the sequence is SDLGIEGGERAQGQNAHSVHGPGLQTERGGSQLQMVGHPLREL.

This is an uncharacterized protein from Human cytomegalovirus (strain AD169) (HHV-5).